Reading from the N-terminus, the 407-residue chain is uncharacterized protein (407 aa).

A disordered region spans residues 145-231 (EANRFGRSNS…DPLTSITSDT (87 aa)). The span at 158-175 (SNSRSKSSRSRSNNRSKS) shows a compositional bias: basic residues. Residues 176–196 (SRSSSTQSKSNNRSNSRSNSK) are compositionally biased toward low complexity. Residues 271-407 (IVFETLDQND…NHKIHMEKDI (137 aa)) form the N-acetyltransferase domain.

Its subcellular location is the virion. This is an uncharacterized protein from Acanthamoeba polyphaga (Amoeba).